The following is a 572-amino-acid chain: Mitochondrial distribution and morphology protein 34 (572 aa).

Residues 1–195 (MAFNFNWSPL…LPAIIHRLSL (195 aa)) form the SMP-LTD domain. Disordered stretches follow at residues 208–236 (LQTQ…VDAL), 296–405 (PSDQ…CSAP), 455–518 (RDTA…PFIN), and 551–572 (NACG…AYGH). Over residues 296–347 (PSDQTDASGGVTSPFSPVLSRTQSQVGSMSSFPDSASMVSNQSRSSTPSHTF) the composition is skewed to polar residues. Over residues 358–370 (RHSKAHARKRKKR) the composition is skewed to basic residues. Residues 371-381 (VVDLRRPKTTD) show a composition bias toward basic and acidic residues. Composition is skewed to polar residues over residues 387 to 401 (SDES…TPSI) and 498 to 511 (ATGS…QLPS).

Belongs to the MDM34 family. In terms of assembly, component of the ER-mitochondria encounter structure (ERMES) or MDM complex, composed of mmm1, mdm10, mdm12 and mdm34.

It localises to the mitochondrion outer membrane. Its function is as follows. Component of the ERMES/MDM complex, which serves as a molecular tether to connect the endoplasmic reticulum (ER) and mitochondria. Components of this complex are involved in the control of mitochondrial shape and protein biogenesis, and function in nonvesicular lipid trafficking between the ER and mitochondria. Mdm34 is required for the interaction of the ER-resident membrane protein mmm1 and the outer mitochondrial membrane-resident beta-barrel protein mdm10. The chain is Mitochondrial distribution and morphology protein 34 from Neosartorya fischeri (strain ATCC 1020 / DSM 3700 / CBS 544.65 / FGSC A1164 / JCM 1740 / NRRL 181 / WB 181) (Aspergillus fischerianus).